The chain runs to 480 residues: Uridine 5'-monophosphate synthase (480 aa).

Ala-2 is modified (N-acetylalanine). The interval 2–214 (AAVGAALGPL…VFVAANHNGS (213 aa)) is OPRTase. Residue Tyr-37 is modified to Phosphotyrosine. Ser-214 is subject to Phosphoserine. Residues 215–220 (PLSIKE) are domain linker. Residues 221 to 480 (APKELSFSAR…WEAYLSRLGV (260 aa)) are OMPdecase. Ser-257 contributes to the orotidine 5'-phosphate binding site. UMP contacts are provided by residues Ser-257, Asp-259, and 281–283 (KTH). Orotidine 5'-phosphate is bound by residues Lys-281, Lys-314, Asp-317, Thr-321, Ser-372, 430 to 432 (QQY), and 450 to 451 (GR). Catalysis depends on for OMPdecase activity residues Lys-314 and Asp-317. UMP-binding positions include Asp-317, Thr-321, Ser-372, 430 to 432 (QQY), and 450 to 451 (GR).

It in the N-terminal section; belongs to the purine/pyrimidine phosphoribosyltransferase family. The protein in the C-terminal section; belongs to the OMP decarboxylase family. In terms of assembly, homodimer; dimerization is required for enzymatic activity.

It carries out the reaction orotidine 5'-phosphate + diphosphate = orotate + 5-phospho-alpha-D-ribose 1-diphosphate. The catalysed reaction is orotidine 5'-phosphate + H(+) = UMP + CO2. It functions in the pathway pyrimidine metabolism; UMP biosynthesis via de novo pathway; UMP from orotate: step 1/2. Its pathway is pyrimidine metabolism; UMP biosynthesis via de novo pathway; UMP from orotate: step 2/2. Functionally, bifunctional enzyme catalyzing the last two steps of de novo pyrimidine biosynthesis, orotate phosphoribosyltransferase (OPRT), which converts orotate to orotidine-5'-monophosphate (OMP), and orotidine-5'-monophosphate decarboxylase (ODC), the terminal enzymatic reaction that decarboxylates OMP to uridine monophosphate (UMP). This chain is Uridine 5'-monophosphate synthase (UMPS), found in Pongo abelii (Sumatran orangutan).